Reading from the N-terminus, the 525-residue chain is GMP synthase [glutamine-hydrolyzing] (525 aa).

The Glutamine amidotransferase type-1 domain maps to 9 to 207 (KILILDFGSQ…IVDICGCDTL (199 aa)). Catalysis depends on Cys-86, which acts as the Nucleophile. Active-site residues include His-181 and Glu-183. In terms of domain architecture, GMPS ATP-PPase spans 208 to 400 (WTPANIAQDA…LGLPYDMVYR (193 aa)). ATP is bound at residue 235 to 241 (SGGVDSS).

Homodimer.

The catalysed reaction is XMP + L-glutamine + ATP + H2O = GMP + L-glutamate + AMP + diphosphate + 2 H(+). It functions in the pathway purine metabolism; GMP biosynthesis; GMP from XMP (L-Gln route): step 1/1. Its function is as follows. Catalyzes the synthesis of GMP from XMP. The protein is GMP synthase [glutamine-hydrolyzing] of Marinomonas sp. (strain MWYL1).